The primary structure comprises 1155 residues: MIKRVHLGQGKAEEILDLPNLIEIQLNSYEKFLQLERLKTNRPLLNEGLESVFRDVFPMKSSNGEVALEYEKYYIEYNSLSFTEKECKRKGQSYEAVLKIRLNLQFLTTGEIRQKDVYMGTIPLMTDRGTFIVNGAERVIVSQIHRSPGVVFYKEKDLYYARIIPYRGSWLEFEIDSKKDYLYVKIDRKKRILVTLFLRALGLNTRERIIETFYKIRKIEVNEDTKREITGQYLATNIIIKENMTYRAGDKITLQDIEDFLQNGVKEIDLIDFDGYDSVPGKHFISSDVILNCFEKEDAYFSLKDGFKELSRESVMLAVYSVLLPGEPISIDNAESDLRNVFFSEKRYDLGHVGRYKLSKKFGLDDLTTSVLTMTDIVNTISHLLRIYDGHDVLDDIDHLGNRRVRSVGELLTNIYKGAMSRVEKIAKDRMSNKEVFNLKPQELISVKPIVSAVKEFFATSQLSQFMDQVNPLAELTHKRRLNALGPGGLSRDRAGFEVRDVHYTHYGRMCPIETPEGPNIGLIVSLATYAKVNDYGFLETPYRKVVDGKVTDEIEYLSAIDEEKKCIAQANAAVNAEGNYIDDLISVRVSGDYTTMIPKNIDYMDVSPRQLISVSSALIPFLEHNDANRALMGSNMQRQAVPLLFPQPPIVGTGMERIVAKDSGVVVKAKRSGIVVLATSKKIVIRPEDAADDHDLDEYELAKYERTNQDTSFNHSVLVKEGQVVNKGEIIADGPATRYGEVALGNNLLVGFIPWNGFNYEDAILISERIIKEDLYTSIHIKEFSIEVRETKLGPEKVTADIPNVSGKILNKLDENGIVRIGTYVKPGDILIGKVTPKSEGDITPEFKLLTSIFGEKAKDVKNNSLKVPHGTEGTVIDVQRITKDDVSNLPPGVDEILKVYIAKKRKLKEGDKMAGRHGNKGVVAKILPVEDMPYLADGTPLDICLNPLGVPSRMNIGQLMESQLGLAGKYLGEYYDVPVFESATNECIQEKLKKAGFNETSKAVLYDGYTGEPFENEVMVGIIYMLKLHHLVDDKMHARSTGPYSLVSQQPLGGKAQFGGQRLGEMEVWALEAYGAAHTLQELLTVKSDDMSGRVKIYENIVKGIPTNVSGIPESFNVLMQELRGLGFDLSIYDDKGNQIPLTEKEEELINKT.

This sequence belongs to the RNA polymerase beta chain family. As to quaternary structure, the RNAP catalytic core consists of 2 alpha, 1 beta, 1 beta' and 1 omega subunit. When a sigma factor is associated with the core the holoenzyme is formed, which can initiate transcription.

It carries out the reaction RNA(n) + a ribonucleoside 5'-triphosphate = RNA(n+1) + diphosphate. Its function is as follows. DNA-dependent RNA polymerase catalyzes the transcription of DNA into RNA using the four ribonucleoside triphosphates as substrates. In Borrelia hermsii (strain HS1 / DAH), this protein is DNA-directed RNA polymerase subunit beta.